Consider the following 308-residue polypeptide: Glucan 1,3-beta-glucosidase (308 aa).

The N-terminal stretch at 1–18 is a signal peptide; that stretch reads MQIKFLTTLATVLTSVAA. The active-site Proton donor is Glu119. N-linked (GlcNAc...) asparagine glycosylation occurs at Asn197. The Nucleophile role is filled by Glu228.

The protein belongs to the glycosyl hydrolase 17 family.

It is found in the secreted. The protein resides in the cell wall. The catalysed reaction is Successive hydrolysis of beta-D-glucose units from the non-reducing ends of (1-&gt;3)-beta-D-glucans, releasing alpha-glucose.. In Candida albicans (Yeast), this protein is Glucan 1,3-beta-glucosidase (BGL2).